Consider the following 271-residue polypeptide: Aquaporin-11 (271 aa).

The Cytoplasmic segment spans residues 1–14 (MSPLLGLRSELQDT). The helical transmembrane segment at 15 to 35 (CTSLGLMLSVVLLMGLARVVA) threads the bilayer. The Lumenal portion of the chain corresponds to 36–41 (RQQLHR). The chain crosses the membrane as a helical span at residues 42-62 (PVAHAFVLEFLATFQLCCCTH). Topologically, residues 63–74 (ELQLLSEQHPAH) are cytoplasmic. The helical transmembrane segment at 75 to 95 (PTWTLTLVYFFSLVHGLTLVG) threads the bilayer. The Lumenal portion of the chain corresponds to 96–163 (TSSNPCGVMM…ACKNPIRVDL (68 aa)). An NPC motif is present at residues 99-101 (NPC). The helical transmembrane segment at 164–184 (LKAVITEAVCSFLFHSALLHF) threads the bilayer. Residues 185 to 194 (QEVRTKLRIH) are Cytoplasmic-facing. The chain crosses the membrane as a helical span at residues 195-215 (LLAALITFLVYAGGSLTGAVF). The NPA signature appears at 216–218 (NPA). The Lumenal segment spans residues 216-234 (NPALALSLHFMCFDEAFPQ). Residues 235-255 (FFIVYWLAPSLGILLMILMFS) traverse the membrane as a helical segment. At 256-271 (FFLPWLHNNHTINKKE) the chain is on the cytoplasmic side.

Belongs to the MIP/aquaporin (TC 1.A.8) family. AQP11/AQP12 subfamily. Homodimer; disulfide-linked. Homotetramer. Can also form homomultimer. Post-translationally, not glycosylated. As to expression, detected in the sperm head and tail (at protein level). Expressed in subcutaneous adipocytes. Expressed in testis, kidney and ejaculated spermatozoa.

It is found in the endoplasmic reticulum membrane. The protein resides in the cytoplasmic vesicle membrane. The protein localises to the cell membrane. It catalyses the reaction H2O(in) = H2O(out). It carries out the reaction glycerol(in) = glycerol(out). The catalysed reaction is H2O2(out) = H2O2(in). In terms of biological role, channel protein that facilitates the transport of water, glycerol and hydrogen peroxide across membrane of cell or organelles guaranteeing intracellular homeostasis in several organes like liver, kidney and brain. In situation of stress, participates in endoplasmic reticulum (ER) homeostasis by regulating redox homeostasis through the transport of hydrogen peroxide across the endoplasmic reticulum membrane thereby regulating the oxidative stress through the NADPH oxidase 2 pathway. Plays a role by maintaining an environment suitable for translation or protein foldings in the ER lumen namely by participating in the PKD1 glycosylation processing resulting in regulation of PKD1 membrane trafficking thereby preventing the accumulation of unfolding protein in ER. Plays a role in the proximal tubule function by regulating its endosomal acidification. May play a role in postnatal kidney development. The sequence is that of Aquaporin-11 from Homo sapiens (Human).